The chain runs to 573 residues: Proline--tRNA ligase (573 aa).

The protein belongs to the class-II aminoacyl-tRNA synthetase family. ProS type 1 subfamily. As to quaternary structure, homodimer.

The protein resides in the cytoplasm. The catalysed reaction is tRNA(Pro) + L-proline + ATP = L-prolyl-tRNA(Pro) + AMP + diphosphate. Its function is as follows. Catalyzes the attachment of proline to tRNA(Pro) in a two-step reaction: proline is first activated by ATP to form Pro-AMP and then transferred to the acceptor end of tRNA(Pro). As ProRS can inadvertently accommodate and process non-cognate amino acids such as alanine and cysteine, to avoid such errors it has two additional distinct editing activities against alanine. One activity is designated as 'pretransfer' editing and involves the tRNA(Pro)-independent hydrolysis of activated Ala-AMP. The other activity is designated 'posttransfer' editing and involves deacylation of mischarged Ala-tRNA(Pro). The misacylated Cys-tRNA(Pro) is not edited by ProRS. In Geobacter sp. (strain M21), this protein is Proline--tRNA ligase.